A 204-amino-acid polypeptide reads, in one-letter code: ATP phosphoribosyltransferase (204 aa).

It belongs to the ATP phosphoribosyltransferase family. Short subfamily. Heteromultimer composed of HisG and HisZ subunits.

It localises to the cytoplasm. The catalysed reaction is 1-(5-phospho-beta-D-ribosyl)-ATP + diphosphate = 5-phospho-alpha-D-ribose 1-diphosphate + ATP. The protein operates within amino-acid biosynthesis; L-histidine biosynthesis; L-histidine from 5-phospho-alpha-D-ribose 1-diphosphate: step 1/9. In terms of biological role, catalyzes the condensation of ATP and 5-phosphoribose 1-diphosphate to form N'-(5'-phosphoribosyl)-ATP (PR-ATP). Has a crucial role in the pathway because the rate of histidine biosynthesis seems to be controlled primarily by regulation of HisG enzymatic activity. The sequence is that of ATP phosphoribosyltransferase from Staphylococcus aureus (strain bovine RF122 / ET3-1).